We begin with the raw amino-acid sequence, 828 residues long: Periplasmic nitrate reductase (828 aa).

Positions 1–31 (MKLSRRSFMKANAVAAAAAAAGLSVPGVARA) form a signal peptide, tat-type signal. Residues 39–95 (IKWDKAPCRFCGTGCGVLVGTQQGRVVACQGDPDAPVNRGLNCIKGYFLPKIMYGKD) enclose the 4Fe-4S Mo/W bis-MGD-type domain. 4 residues coordinate [4Fe-4S] cluster: Cys-46, Cys-49, Cys-53, and Cys-81. Residues Lys-83, Gln-150, Asn-175, Cys-179, 212–219 (WGANMAEM), 243–247 (STYQH), 262–264 (QSD), Met-372, Gln-376, Asn-482, 508–509 (SD), Lys-531, Asp-558, and 718–727 (TGRVLEHWHT) contribute to the Mo-bis(molybdopterin guanine dinucleotide) site. Phe-794 serves as a coordination point for substrate. Asn-802 and Lys-819 together coordinate Mo-bis(molybdopterin guanine dinucleotide).

The protein belongs to the prokaryotic molybdopterin-containing oxidoreductase family. NasA/NapA/NarB subfamily. As to quaternary structure, component of the periplasmic nitrate reductase NapAB complex composed of NapA and NapB. It depends on [4Fe-4S] cluster as a cofactor. Requires Mo-bis(molybdopterin guanine dinucleotide) as cofactor. In terms of processing, predicted to be exported by the Tat system. The position of the signal peptide cleavage has not been experimentally proven.

It is found in the periplasm. The enzyme catalyses 2 Fe(II)-[cytochrome] + nitrate + 2 H(+) = 2 Fe(III)-[cytochrome] + nitrite + H2O. Functionally, catalytic subunit of the periplasmic nitrate reductase complex NapAB. Receives electrons from NapB and catalyzes the reduction of nitrate to nitrite. This is Periplasmic nitrate reductase from Shigella flexneri.